Consider the following 333-residue polypeptide: Anthranilate phosphoribosyltransferase (333 aa).

5-phospho-alpha-D-ribose 1-diphosphate is bound by residues Gly-81, 84–85, Thr-89, 91–94, 109–117, and Ser-121; these read GD, NIST, and KHGNRSVSS. Gly-81 contacts anthranilate. Ser-93 is a binding site for Mg(2+). Position 112 (Asn-112) interacts with anthranilate. Residue Arg-167 coordinates anthranilate. 2 residues coordinate Mg(2+): Asp-225 and Glu-226.

This sequence belongs to the anthranilate phosphoribosyltransferase family. As to quaternary structure, homodimer. It depends on Mg(2+) as a cofactor.

It catalyses the reaction N-(5-phospho-beta-D-ribosyl)anthranilate + diphosphate = 5-phospho-alpha-D-ribose 1-diphosphate + anthranilate. It functions in the pathway amino-acid biosynthesis; L-tryptophan biosynthesis; L-tryptophan from chorismate: step 2/5. Its function is as follows. Catalyzes the transfer of the phosphoribosyl group of 5-phosphorylribose-1-pyrophosphate (PRPP) to anthranilate to yield N-(5'-phosphoribosyl)-anthranilate (PRA). This Glaesserella parasuis serovar 5 (strain SH0165) (Haemophilus parasuis) protein is Anthranilate phosphoribosyltransferase.